The sequence spans 158 residues: Transcriptional repressor NrdR (158 aa).

The segment at 1–22 (MRCPYCGSEDTQVKDSRPAEDN) is disordered. A zinc finger lies at 3-34 (CPYCGSEDTQVKDSRPAEDNTSIRRRRICPDC). Basic and acidic residues predominate over residues 11 to 22 (TQVKDSRPAEDN). The region spanning 49-139 (LMVIKKTGRK…VYRDFSLAED (91 aa)) is the ATP-cone domain.

It belongs to the NrdR family. Requires Zn(2+) as cofactor.

Functionally, negatively regulates transcription of bacterial ribonucleotide reductase nrd genes and operons by binding to NrdR-boxes. This Rhizobium etli (strain CIAT 652) protein is Transcriptional repressor NrdR.